The primary structure comprises 94 residues: Integration host factor subunit beta (94 aa).

Belongs to the bacterial histone-like protein family. Heterodimer of an alpha and a beta chain.

Functionally, this protein is one of the two subunits of integration host factor, a specific DNA-binding protein that functions in genetic recombination as well as in transcriptional and translational control. In Brucella abortus (strain S19), this protein is Integration host factor subunit beta.